Reading from the N-terminus, the 940-residue chain is Mitogen-activated protein kinase kinase kinase 10 (940 aa).

Residues 16-81 enclose the SH3 domain; it reads PAGPVWTAVF…PSNYVAPAAP (66 aa). The region spanning 98-360 is the Protein kinase domain; that stretch reads LQLEEIIGVG…GSILKQLEVI (263 aa). ATP is bound by residues 104 to 112 and lysine 125; that span reads IGVGGFGKV. The Proton acceptor role is filled by aspartate 222. A Phosphothreonine; by autocatalysis modification is found at threonine 258. Phosphoserine; by autocatalysis and MAP4K1 is present on serine 262. Leucine-zipper regions lie at residues 384–405 and 419–440; these read IQHM…EEEL and LRRR…ELHL. Disordered stretches follow at residues 490-599, 687-734, and 749-917; these read PTLD…MAPG, RAGD…GLAP, and STRS…QPTL. 3 positions are modified to phosphoserine: serine 498, serine 502, and serine 506. Positions 501 to 511 are enriched in low complexity; sequence ASPPASPSIIP. Threonine 552 carries the phosphothreonine modification. Basic and acidic residues-rich tracts occupy residues 560-572 and 687-698; these read QKER…RLKA and RAGDGEEQRRWL. Residues 765 to 775 show a composition bias toward pro residues; sequence APSPPPSPLAP. The span at 822–840 shows a compositional bias: basic and acidic residues; the sequence is LRQREPLELTNHGPRDPLD. Position 843 is an omega-N-methylarginine (arginine 843). Pro residues predominate over residues 899–913; the sequence is PSRPDTPESPGPPSV.

Belongs to the protein kinase superfamily. STE Ser/Thr protein kinase family. MAP kinase kinase kinase subfamily. In terms of assembly, homodimer. Interacts with SH3RF2. Requires Mg(2+) as cofactor. Autophosphorylation on serine and threonine residues within the activation loop plays a role in enzyme activation.

The enzyme catalyses L-seryl-[protein] + ATP = O-phospho-L-seryl-[protein] + ADP + H(+). It carries out the reaction L-threonyl-[protein] + ATP = O-phospho-L-threonyl-[protein] + ADP + H(+). Homodimerization via the leucine zipper domains is required for autophosphorylation and subsequent activation. Its function is as follows. Activates the JUN N-terminal pathway. This chain is Mitogen-activated protein kinase kinase kinase 10 (Map3k10), found in Mus musculus (Mouse).